Consider the following 689-residue polypeptide: Acetyl-coenzyme A synthetase 2-like, mitochondrial (689 aa).

A mitochondrion-targeting transit peptide spans Met-1–Ala-37. Residues Leu-17–Pro-46 are disordered. The span at Ser-32–Pro-46 shows a compositional bias: low complexity. Residues Arg-224 to Arg-227 and Thr-341 each bind CoA. Lys-396 is modified (N6-acetyllysine). ATP-binding positions include Gly-417–Pro-419, Asp-441–Thr-446, Asp-533, and Arg-548. Ser-556 contacts CoA. Arg-559 provides a ligand contact to ATP. Lys-642 bears the N6-acetyllysine mark.

This sequence belongs to the ATP-dependent AMP-binding enzyme family. As to quaternary structure, interacts with SIRT3. Post-translationally, reversibly acetylated on Lys-642. The acetyl-CoA synthase activity is inhibited by acetylation and activated by deacetylation mediated by the deacetylase SIRT3.

It localises to the mitochondrion matrix. The catalysed reaction is acetate + ATP + CoA = acetyl-CoA + AMP + diphosphate. It carries out the reaction propanoate + ATP + CoA = propanoyl-CoA + AMP + diphosphate. Its activity is regulated as follows. Inhibited by acetylation at Lys-642 and activated by deacetylation mediated by the deacetylase SIRT3. Catalyzes the synthesis of acetyl-CoA from short-chain fatty acids. Acetate is the preferred substrate. Can also utilize propionate with a much lower affinity. Provides acetyl-CoA that is utilized mainly for oxidation under ketogenic conditions. Involved in thermogenesis under ketogenic conditions, using acetate as a vital fuel when carbohydrate availability is insufficient. The sequence is that of Acetyl-coenzyme A synthetase 2-like, mitochondrial (ACSS1) from Homo sapiens (Human).